The following is a 171-amino-acid chain: Cation channel sperm-associated auxiliary subunit TMEM249 (171 aa).

Residues 1-2 (ML) lie on the Cytoplasmic side of the membrane. The chain crosses the membrane as a helical span at residues 3–17 (FIICLVFISCNVLRE). The Extracellular portion of the chain corresponds to 18–28 (VKYQETWCFPA). A helical membrane pass occupies residues 29-40 (YGMVIGLWLMLS). Residues 41–171 (SIPQRRLVLN…TKSSVNDLDV (131 aa)) lie on the Cytoplasmic side of the membrane.

In terms of assembly, component of the CatSper complex or CatSpermasome composed of the core pore-forming members CATSPER1, CATSPER2, CATSPER3 and CATSPER4 as well as auxiliary members CATSPERB, CATSPERG2, CATSPERD, CATSPERE, CATSPERZ, C2CD6/CATSPERT, SLCO6C1, TMEM249, TMEM262 and EFCAB9. HSPA1 may be an additional auxiliary complex member. The core complex members CATSPER1, CATSPER2, CATSPER3 and CATSPER4 form a heterotetrameric channel. The auxiliary CATSPERB, CATSPERG2, CATSPERD and CATSPERE subunits form a pavilion-like structure over the pore which stabilizes the complex through interactions with CATSPER4, CATSPER3, CATSPER1 and CATSPER2 respectively. SLCO6C1 interacts with CATSPERE and TMEM262/CATSPERH interacts with CATSPERB, further stabilizing the complex. C2CD6/CATSPERT interacts at least with CATSPERD and is required for targeting the CatSper complex in the flagellar membrane.

It localises to the cell projection. The protein resides in the cilium. It is found in the flagellum membrane. Auxiliary component of the CatSper complex, a complex involved in sperm cell hyperactivation. This chain is Cation channel sperm-associated auxiliary subunit TMEM249, found in Mus musculus (Mouse).